The sequence spans 710 residues: Interferon-induced GTP-binding protein Mx2 (710 aa).

A disordered region spans residues 1 to 87 (MSLSFRPLKY…RSKGPENNLY (87 aa)). Composition is skewed to polar residues over residues 39–50 (QTMSPPQWQVEE) and 58–79 (NNFS…QQRS). The Dynamin-type G domain occupies 112 to 383 (DLALPAIAVI…LIWHINKSLP (272 aa)). Positions 122 to 129 (GDQSSGKS) are G1 motif. 122–129 (GDQSSGKS) contacts GTP. Residues 147–149 (ITR) form a G2 motif region. The interval 221–224 (DLPG) is G3 motif. GTP-binding positions include 221-225 (DLPGI) and 290-293 (TKPD). The tract at residues 290-293 (TKPD) is G4 motif. Residues 322–325 (KCRG) are G5 motif. One can recognise a GED domain in the interval 619-710 (IVEIGVHLNA…ALYEFPHFKG (92 aa)).

It belongs to the TRAFAC class dynamin-like GTPase superfamily. Dynamin/Fzo/YdjA family.

Its subcellular location is the cytoplasm. The protein localises to the nucleus. Functionally, interferon-induced dynamin-like GTPase with antiviral activity against vesicular stomatitis virus (VSV). This chain is Interferon-induced GTP-binding protein Mx2 (MX2), found in Bubalus bubalis (Domestic water buffalo).